Reading from the N-terminus, the 75-residue chain is Mitotic-spindle organizing protein 1 (75 aa).

It belongs to the MOZART1 family. In terms of assembly, part of the gamma-tubulin complex.

It is found in the cytoplasm. The protein localises to the cytoskeleton. The protein resides in the microtubule organizing center. Its subcellular location is the centrosome. It localises to the spindle. In terms of biological role, required for gamma-tubulin complex recruitment to the centrosome. This is Mitotic-spindle organizing protein 1 (mzt1) from Danio rerio (Zebrafish).